Here is a 225-residue protein sequence, read N- to C-terminus: Heptaprenylglyceryl phosphate synthase (225 aa).

Lys-6 provides a ligand contact to sn-glycerol 1-phosphate. Mg(2+) contacts are provided by Asp-8 and Thr-34. Residues 153–158 (YVEYSG), Gly-183, and 203–204 (GN) contribute to the sn-glycerol 1-phosphate site.

This sequence belongs to the GGGP/HepGP synthase family. Group I subfamily. In terms of assembly, homodimer. It depends on Mg(2+) as a cofactor.

It catalyses the reaction sn-glycerol 1-phosphate + all-trans-heptaprenyl diphosphate = 3-heptaprenyl-sn-glycero-1-phosphate + diphosphate. It functions in the pathway membrane lipid metabolism; glycerophospholipid metabolism. Its function is as follows. Prenyltransferase that catalyzes in vivo the transfer of the heptaprenyl moiety of heptaprenyl pyrophosphate (HepPP; 35 carbon atoms) to the C3 hydroxyl of sn-glycerol-1-phosphate (G1P), producing heptaprenylglyceryl phosphate (HepGP). This reaction is an ether-bond-formation step in the biosynthesis of archaea-type G1P-based membrane lipids found in Bacillales. The sequence is that of Heptaprenylglyceryl phosphate synthase from Listeria innocua serovar 6a (strain ATCC BAA-680 / CLIP 11262).